Here is a 352-residue protein sequence, read N- to C-terminus: Uroporphyrinogen decarboxylase (352 aa).

Substrate-binding positions include Arg27–Arg31, Asp77, Tyr154, Thr209, and His325.

The protein belongs to the uroporphyrinogen decarboxylase family. Homodimer.

The protein resides in the cytoplasm. The catalysed reaction is uroporphyrinogen III + 4 H(+) = coproporphyrinogen III + 4 CO2. Its pathway is porphyrin-containing compound metabolism; protoporphyrin-IX biosynthesis; coproporphyrinogen-III from 5-aminolevulinate: step 4/4. Functionally, catalyzes the decarboxylation of four acetate groups of uroporphyrinogen-III to yield coproporphyrinogen-III. The protein is Uroporphyrinogen decarboxylase of Legionella pneumophila (strain Lens).